A 101-amino-acid chain; its full sequence is Small ribosomal subunit protein uS14 (101 aa).

The protein belongs to the universal ribosomal protein uS14 family. In terms of assembly, part of the 30S ribosomal subunit. Contacts proteins S3 and S10.

Functionally, binds 16S rRNA, required for the assembly of 30S particles and may also be responsible for determining the conformation of the 16S rRNA at the A site. In Corynebacterium efficiens (strain DSM 44549 / YS-314 / AJ 12310 / JCM 11189 / NBRC 100395), this protein is Small ribosomal subunit protein uS14.